We begin with the raw amino-acid sequence, 187 residues long: NADH-quinone oxidoreductase subunit B (187 aa).

Positions 46, 47, 112, and 141 each coordinate [4Fe-4S] cluster.

This sequence belongs to the complex I 20 kDa subunit family. NDH-1 is composed of 14 different subunits. Subunits NuoB, C, D, E, F, and G constitute the peripheral sector of the complex. The cofactor is [4Fe-4S] cluster.

The protein resides in the cell inner membrane. It carries out the reaction a quinone + NADH + 5 H(+)(in) = a quinol + NAD(+) + 4 H(+)(out). In terms of biological role, NDH-1 shuttles electrons from NADH, via FMN and iron-sulfur (Fe-S) centers, to quinones in the respiratory chain. The immediate electron acceptor for the enzyme in this species is believed to be ubiquinone. Couples the redox reaction to proton translocation (for every two electrons transferred, four hydrogen ions are translocated across the cytoplasmic membrane), and thus conserves the redox energy in a proton gradient. This chain is NADH-quinone oxidoreductase subunit B, found in Myxococcus xanthus (strain DK1622).